A 183-amino-acid polypeptide reads, in one-letter code: Peptidyl-tRNA hydrolase (183 aa).

Tyrosine 14 is a binding site for tRNA. Histidine 19 acts as the Proton acceptor in catalysis. TRNA-binding residues include tyrosine 60 and asparagine 62.

The protein belongs to the PTH family. Monomer.

It is found in the cytoplasm. The enzyme catalyses an N-acyl-L-alpha-aminoacyl-tRNA + H2O = an N-acyl-L-amino acid + a tRNA + H(+). In terms of biological role, hydrolyzes ribosome-free peptidyl-tRNAs (with 1 or more amino acids incorporated), which drop off the ribosome during protein synthesis, or as a result of ribosome stalling. Functionally, catalyzes the release of premature peptidyl moieties from peptidyl-tRNA molecules trapped in stalled 50S ribosomal subunits, and thus maintains levels of free tRNAs and 50S ribosomes. The polypeptide is Peptidyl-tRNA hydrolase (Mycoplasmoides gallisepticum (strain R(low / passage 15 / clone 2)) (Mycoplasma gallisepticum)).